The following is a 193-amino-acid chain: Acyl carrier protein phosphodiesterase (193 aa).

Belongs to the AcpH family.

The enzyme catalyses holo-[ACP] + H2O = apo-[ACP] + (R)-4'-phosphopantetheine + H(+). Functionally, converts holo-ACP to apo-ACP by hydrolytic cleavage of the phosphopantetheine prosthetic group from ACP. The sequence is that of Acyl carrier protein phosphodiesterase from Escherichia coli O6:H1 (strain CFT073 / ATCC 700928 / UPEC).